A 347-amino-acid chain; its full sequence is NADH-ubiquinone oxidoreductase chain 2 (347 aa).

The next 11 helical transmembrane spans lie at 5 to 22 (ILIT…IVLF), 26 to 45 (WFMI…PILM), 60 to 80 (FLTQ…NLLC), 96 to 116 (TMIT…FWVP), 122 to 142 (ISLS…LSIL), 153 to 173 (LLLM…LNQT), 178 to 198 (ILAY…VYNP), 200 to 220 (LAIL…MLFM), 237 to 257 (FPLM…LPPL), 274 to 294 (DMII…YFYT), and 325 to 345 (LLAP…MLAA).

Belongs to the complex I subunit 2 family. Core subunit of respiratory chain NADH dehydrogenase (Complex I) which is composed of 45 different subunits. Interacts with TMEM242.

It is found in the mitochondrion inner membrane. The catalysed reaction is a ubiquinone + NADH + 5 H(+)(in) = a ubiquinol + NAD(+) + 4 H(+)(out). Core subunit of the mitochondrial membrane respiratory chain NADH dehydrogenase (Complex I) which catalyzes electron transfer from NADH through the respiratory chain, using ubiquinone as an electron acceptor. Essential for the catalytic activity and assembly of complex I. The chain is NADH-ubiquinone oxidoreductase chain 2 from Ailuropoda melanoleuca (Giant panda).